Reading from the N-terminus, the 273-residue chain is WIMGHMVNAIGQIDEFVNLGANSIETDVSFDSSANPEYTYHGIPCECGRNCKKWENFNDFLKGLRSATTPGNSKYKEKLVLVVFDLKTGSLYDNQANDAGKKLAKNLLQHYWNNGNNGGRAYIVLSIPDLNHYPLIKGFTDTLKQEGHPELLGKLGYDFSGNDAIGDVAKAYKKAGVSGHVWQSDGITNCLLRGLTRVKEAVANRDSGNGYINKVYYWTVDKRATTRDALDAGVDGIMTNYPDVITDVLNEAAYKSKFRVATYEDNPWETFKK.

The active site involves His5. Residues Glu25 and Asp27 each coordinate Mg(2+). Residue His41 is the Nucleophile of the active site. Intrachain disulfides connect Cys45–Cys51 and Cys47–Cys190. Asp85 is a Mg(2+) binding site.

Belongs to the arthropod phospholipase D family. Class II subfamily. Mg(2+) is required as a cofactor. Expressed by the venom gland.

Its subcellular location is the secreted. It catalyses the reaction an N-(acyl)-sphingosylphosphocholine = an N-(acyl)-sphingosyl-1,3-cyclic phosphate + choline. The catalysed reaction is an N-(acyl)-sphingosylphosphoethanolamine = an N-(acyl)-sphingosyl-1,3-cyclic phosphate + ethanolamine. The enzyme catalyses a 1-acyl-sn-glycero-3-phosphocholine = a 1-acyl-sn-glycero-2,3-cyclic phosphate + choline. It carries out the reaction a 1-acyl-sn-glycero-3-phosphoethanolamine = a 1-acyl-sn-glycero-2,3-cyclic phosphate + ethanolamine. Its function is as follows. Dermonecrotic toxins cleave the phosphodiester linkage between the phosphate and headgroup of certain phospholipids (sphingolipid and lysolipid substrates), forming an alcohol (often choline) and a cyclic phosphate. This toxin acts on sphingomyelin (SM). It may also act on ceramide phosphoethanolamine (CPE), lysophosphatidylcholine (LPC) and lysophosphatidylethanolamine (LPE), but not on lysophosphatidylserine (LPS), and lysophosphatidylglycerol (LPG). It acts by transphosphatidylation, releasing exclusively cyclic phosphate products as second products. Induces dermonecrosis, hemolysis, increased vascular permeability, edema, inflammatory response, and platelet aggregation. This is Dermonecrotic toxin LhSicTox-alphaIA1iv from Loxosceles hirsuta (Recluse spider).